A 350-amino-acid polypeptide reads, in one-letter code: Guanine nucleotide-binding protein G(t) subunit alpha-1 (350 aa).

Residues 1-21 form a disordered region; the sequence is MGAGASAEEKHSRELEKKLKE. Gly2 carries the N-myristoyl glycine lipid modification. The span at 7–21 shows a compositional bias: basic and acidic residues; the sequence is AEEKHSRELEKKLKE. Residues 28-350 form the G-alpha domain; sequence RTVKLLLLGA…KENLKDCGLF (323 aa). The tract at residues 31 to 44 is G1 motif; the sequence is KLLLLGAGESGKST. A GTP-binding site is contributed by 36 to 43; the sequence is GAGESGKS. Residue Ser43 coordinates Mg(2+). Residue Tyr142 is modified to Phosphotyrosine; by SRC. GTP is bound by residues Asp146, 171–177, Gly199, 265–268, and Ala322; these read LRSRVKT and NKKD. The segment at 169–177 is G2 motif; it reads DVLRSRVKT. Arg174 bears the ADP-ribosylarginine; by cholera toxin mark. Residue Thr177 coordinates Mg(2+). Positions 192–201 are G3 motif; that stretch reads FRMFDVGGQR. Residues 261 to 268 form a G4 motif region; it reads VLFLNKKD. The segment at 320-325 is G5 motif; it reads TCATDT. The segment at 340-350 is interaction with RHO; sequence IKENLKDCGLF. ADP-ribosylcysteine; by pertussis toxin is present on Cys347.

This sequence belongs to the G-alpha family. G(i/o/t/z) subfamily. In terms of assembly, heterotrimeric G proteins are composed of 3 subunits alpha, beta and gamma. The alpha chain contains the guanine nucleotide binding site. Interacts with RHO. Interacts with RGS9 and PDE6G. Interacts (when myristoylated) with UNC119; interaction is required for localization in sensory neurons. As to expression, rod photoreceptor cells. Predominantly expressed in the retina followed by the ciliary body, iris and retinal pigment epithelium.

Its subcellular location is the cell projection. It is found in the cilium. The protein resides in the photoreceptor outer segment. The protein localises to the membrane. It localises to the photoreceptor inner segment. Functions as a signal transducer for the rod photoreceptor RHO. Required for normal RHO-mediated light perception by the retina. Guanine nucleotide-binding proteins (G proteins) function as transducers downstream of G protein-coupled receptors (GPCRs), such as the photoreceptor RHO. The alpha chain contains the guanine nucleotide binding site and alternates between an active, GTP-bound state and an inactive, GDP-bound state. Activated RHO promotes GDP release and GTP binding. Signaling is mediated via downstream effector proteins, such as cGMP-phosphodiesterase. The sequence is that of Guanine nucleotide-binding protein G(t) subunit alpha-1 (GNAT1) from Homo sapiens (Human).